Reading from the N-terminus, the 1053-residue chain is LRR receptor-like serine/threonine-protein kinase GHR1 (1053 aa).

Positions 1-18 (MNLSRILLLSMFFLSAMG) are cleaved as a signal peptide. At 19 to 630 (QLPSQDIMAL…NKSTNKLVKV (612 aa)) the chain is on the extracellular side. LRR repeat units lie at residues 73-93 (GVVLDNLGLTADADFSLFSNL), 94-119 (TKLVKLSMSNNSLSGVLPNDLGSFKS), 121-141 (QFLDLSDNLFSSSLPKEIGRS), 142-165 (VSLRNLSLSGNNFSGEIPESMGGL), 166-189 (ISLQSLDMSSNSLSGPLPKSLTRL), 191-212 (DLLYLNLSSNGFTGKMPRGFEL), 213-237 (ISSLEVLDLHGNSIDGNLDGEFFLL), 239-260 (NASYVDISGNRLVTTSGKLLPG), 262-285 (SESIKHLNLSHNQLEGSLTSGFQL), 286-309 (FQNLKVLDLSYNMLSGELPGFNYV), 310-333 (YDLEVLKLSNNRFSGSLPNNLLKG), 335-357 (SLLLTTLDLSGNNLSGPVSSIMS), and 358-384 (TTLHTLDLSSNSLTGELPLLTGGCVLL). Residue N92 is glycosylated (N-linked (GlcNAc...) asparagine). S100 and S102 each carry phosphoserine; by HT1. N103 is a glycosylation site (N-linked (GlcNAc...) asparagine). 2 positions are modified to phosphoserine; by HT1: S105 and S126. N146 and N153 each carry an N-linked (GlcNAc...) asparagine glycan. N196 carries N-linked (GlcNAc...) asparagine glycosylation. N239 carries an N-linked (GlcNAc...) asparagine glycan. Residue S262 is modified to Phosphoserine; by HT1. A glycan (N-linked (GlcNAc...) asparagine) is linked at N269. Residue S278 is modified to Phosphoserine; by HT1. At T280 the chain carries Phosphothreonine; by HT1. S281 is modified (phosphoserine; by HT1). Position 325 is a phosphoserine; by HT1 (S325). N-linked (GlcNAc...) asparagine glycosylation is present at N347. N394 carries N-linked (GlcNAc...) asparagine glycosylation. 8 LRR repeats span residues 401 to 425 (WENIEYLDLSQNHFTGSFPDATPQL), 426 to 449 (LRANHLNLSYNKLTGSLPERIPTH), 450 to 474 (YPKLRVLDISSNSLEGPIPGALLSM), 476 to 498 (TLEEIHLQNNGMTGNIGPLPSSG), 499 to 521 (SRIRLLDLSHNRFDGDLPGVFGS), 522 to 546 (LTNLQVLNLAANNLSGSLPSSMNDI), 548 to 570 (SLSSLDVSQNHFTGPLPSNLSSN), and 572 to 592 (MAFNVSYNDLSGTVPENLKNF). A Phosphotyrosine; by HT1 modification is found at Y406. S410 bears the Phosphoserine; by HT1 mark. T415 bears the Phosphothreonine; by HT1 mark. The residue at position 417 (S417) is a Phosphoserine; by HT1. A glycan (N-linked (GlcNAc...) asparagine) is linked at N432. S434 carries the phosphoserine; by HT1 modification. N-linked (GlcNAc...) asparagine glycans are attached at residues N534, N566, and N575. Phosphoserine; by HT1 is present on residues S613, S614, and S616. N-linked (GlcNAc...) asparagine glycosylation occurs at N621. The helical transmembrane segment at 631–651 (VIIVSCAVALIILILVAILLF) threads the bilayer. At 652–1053 (CICKSRRREE…KTIYEDLSSI (402 aa)) the chain is on the cytoplasmic side. Residues 662-671 (RSITGKETNR) show a composition bias toward basic and acidic residues. The segment at 662 to 684 (RSITGKETNRRAQTIPSGSGGGM) is disordered. 2 positions are modified to phosphothreonine; by HT1: T669 and T675. 5 positions are modified to phosphoserine; by HT1: S678, S680, S698, S699, and S700. Residue S704 is modified to Phosphoserine. Position 713 is a phosphothreonine; by HT1 (T713). Phosphoserine; by HT1 is present on residues S716 and S718. T720 carries the post-translational modification Phosphothreonine; by HT1. 3 positions are modified to phosphoserine; by HT1: S721, S724, and S760. T764 carries the post-translational modification Phosphothreonine; by HT1. S769 is modified (phosphoserine; by HT1). The Protein kinase domain maps to 770 to 1053 (RAPAEVLGRS…KTIYEDLSSI (284 aa)). ATP contacts are provided by residues 776-784 (LGRSSHGTS) and K798. Phosphothreonine; by HT1 is present on residues T928 and T1010. S1015 is modified (phosphoserine; by HT1). T1045 is subject to Phosphothreonine; by HT1. Y1047 is modified (phosphotyrosine; by HT1). Phosphoserine; by HT1 occurs at positions 1051 and 1052.

Belongs to the protein kinase superfamily. Ser/Thr protein kinase family. Interacts with SLAC1 (via N-terminus). Binds to ABI2, but not ABI1. Interacts with CPK3. Post-translationally, phosphorylated by HT1; this phosphorylation is inhibited by MPK12 and MPK4. In terms of tissue distribution, expressed in guard cells and in the vasculature of roots and leaves.

Its subcellular location is the cell membrane. The enzyme catalyses L-seryl-[protein] + ATP = O-phospho-L-seryl-[protein] + ADP + H(+). It catalyses the reaction L-threonyl-[protein] + ATP = O-phospho-L-threonyl-[protein] + ADP + H(+). With respect to regulation, negatively regulated by ABI2. In terms of biological role, receptor kinase acting as an early component in abscisic acid (ABA) signaling. Required for darkness, ABA, high CO(2) and hydrogen peroxide (H(2)O(2)) induction of S-type anion currents in guard cells leading to stomatal closure, possibly via the phosphorylation and activation of the anion channel SLAC1 and as a scaffolding component. Seems to act in parallel with SRK2E/OST1 in the ABA signaling pathway which regulates stomatal movement. Binds ATP. Involved in the local and/or systemic stomatal responses (e.g. stomatal closure) to light stress. This Arabidopsis thaliana (Mouse-ear cress) protein is LRR receptor-like serine/threonine-protein kinase GHR1.